The primary structure comprises 375 residues: Succinyl-diaminopimelate desuccinylase (375 aa).

Residue histidine 66 participates in Zn(2+) binding. Residue aspartate 68 is part of the active site. Aspartate 99 lines the Zn(2+) pocket. The active-site Proton acceptor is glutamate 133. Residues glutamate 134, glutamate 162, and histidine 348 each contribute to the Zn(2+) site.

The protein belongs to the peptidase M20A family. DapE subfamily. In terms of assembly, homodimer. The cofactor is Zn(2+). Co(2+) serves as cofactor.

It catalyses the reaction N-succinyl-(2S,6S)-2,6-diaminopimelate + H2O = (2S,6S)-2,6-diaminopimelate + succinate. It functions in the pathway amino-acid biosynthesis; L-lysine biosynthesis via DAP pathway; LL-2,6-diaminopimelate from (S)-tetrahydrodipicolinate (succinylase route): step 3/3. Functionally, catalyzes the hydrolysis of N-succinyl-L,L-diaminopimelic acid (SDAP), forming succinate and LL-2,6-diaminopimelate (DAP), an intermediate involved in the bacterial biosynthesis of lysine and meso-diaminopimelic acid, an essential component of bacterial cell walls. The polypeptide is Succinyl-diaminopimelate desuccinylase (Enterobacter sp. (strain 638)).